We begin with the raw amino-acid sequence, 522 residues long: Lysophospholipid acyltransferase LPCAT4 (522 aa).

The next 2 membrane-spanning stretches (helical) occupy residues 43–63 (ILGF…LFLM) and 92–112 (HLIY…WITI). Positions 130–135 (HSTFFD) match the HXXXXD motif motif. N-linked (GlcNAc...) asparagine glycans are attached at residues Asn-166 and Asn-517. The segment at 496-522 (GRRKPPHIQQNGGCSGKNNPRNQSKMD) is disordered. Over residues 503 to 522 (IQQNGGCSGKNNPRNQSKMD) the composition is skewed to polar residues.

It belongs to the 1-acyl-sn-glycerol-3-phosphate acyltransferase family.

It localises to the endoplasmic reticulum membrane. It carries out the reaction a 1-acyl-sn-glycero-3-phosphoethanolamine + an acyl-CoA = a 1,2-diacyl-sn-glycero-3-phosphoethanolamine + CoA. The enzyme catalyses a 1-O-(1Z-alkenyl)-sn-glycero-3-phosphoethanolamine + an acyl-CoA = a 1-O-(1Z-alkenyl)-2-acyl-sn-glycero-3-phosphoethanolamine + CoA. It catalyses the reaction a 1-acyl-sn-glycero-3-phosphocholine + an acyl-CoA = a 1,2-diacyl-sn-glycero-3-phosphocholine + CoA. The catalysed reaction is a 1-O-alkyl-sn-glycero-3-phosphocholine + acetyl-CoA = a 1-O-alkyl-2-acetyl-sn-glycero-3-phosphocholine + CoA. It carries out the reaction a 1-acyl-sn-glycero-3-phospho-L-serine + an acyl-CoA = a 1,2-diacyl-sn-glycero-3-phospho-L-serine + CoA. The protein operates within lipid metabolism; phospholipid metabolism. Displays acyl-CoA-dependent lysophospholipid acyltransferase activity with a subset of lysophospholipids as substrates. Prefers long chain acyl-CoAs (C16, C18) as acyl donors. In Xenopus tropicalis (Western clawed frog), this protein is Lysophospholipid acyltransferase LPCAT4 (lpcat4).